A 244-amino-acid chain; its full sequence is Glucosamine-6-phosphate deaminase (244 aa).

The Proton acceptor; for enolization step role is filled by aspartate 67. Asparagine 133 functions as the For ring-opening step in the catalytic mechanism. The active-site Proton acceptor; for ring-opening step is histidine 135. The For ring-opening step role is filled by glutamate 140.

It belongs to the glucosamine/galactosamine-6-phosphate isomerase family. NagB subfamily.

The enzyme catalyses alpha-D-glucosamine 6-phosphate + H2O = beta-D-fructose 6-phosphate + NH4(+). The protein operates within amino-sugar metabolism; N-acetylneuraminate degradation; D-fructose 6-phosphate from N-acetylneuraminate: step 5/5. In terms of biological role, catalyzes the reversible isomerization-deamination of glucosamine 6-phosphate (GlcN6P) to form fructose 6-phosphate (Fru6P) and ammonium ion. In Mycoplasma mycoides subsp. mycoides SC (strain CCUG 32753 / NCTC 10114 / PG1), this protein is Glucosamine-6-phosphate deaminase.